We begin with the raw amino-acid sequence, 280 residues long: Probable protein VP2 (280 aa).

Disordered regions lie at residues 46 to 167 and 200 to 280; these read LGAG…FFTS and AQLS…TYSN. Pro residues predominate over residues 65–81; sequence PEGPGGPPQHAPPNPPP. Residues 90–100 show a composition bias toward gly residues; it reads RGGGAGGAGDG. Acidic residues predominate over residues 106 to 117; it reads DAAEEYGPEDLD. Basic residues predominate over residues 227–251; sequence AKTRRRVKKKPLSSKNKHTKKKKRS. Positions 252-266 are enriched in low complexity; the sequence is YSSSSPSSKDNTSES.

In terms of processing, phosphorylated at C-terminal serines.

This Homo sapiens (Human) protein is Probable protein VP2.